The chain runs to 195 residues: dCTP deaminase (195 aa).

Residues 105 to 110 (RSSLGR), aspartate 123, 131 to 133 (TLE), glutamine 152, tyrosine 166, lysine 173, and glutamine 177 contribute to the dCTP site. Glutamate 133 serves as the catalytic Proton donor/acceptor. Residues 159–195 (KTPADRPYGAERGSKYQGQSGPQASKIQGDREFGGDQ) form a disordered region. Over residues 160–172 (TPADRPYGAERGS) the composition is skewed to basic and acidic residues. Positions 174-184 (YQGQSGPQASK) are enriched in polar residues. Basic and acidic residues predominate over residues 186 to 195 (QGDREFGGDQ).

Belongs to the dCTP deaminase family. As to quaternary structure, homotrimer.

The catalysed reaction is dCTP + H2O + H(+) = dUTP + NH4(+). It functions in the pathway pyrimidine metabolism; dUMP biosynthesis; dUMP from dCTP (dUTP route): step 1/2. Catalyzes the deamination of dCTP to dUTP. This Haloarcula marismortui (strain ATCC 43049 / DSM 3752 / JCM 8966 / VKM B-1809) (Halobacterium marismortui) protein is dCTP deaminase.